Consider the following 145-residue polypeptide: Large ribosomal subunit protein uL13 (145 aa).

It belongs to the universal ribosomal protein uL13 family. Part of the 50S ribosomal subunit.

Functionally, this protein is one of the early assembly proteins of the 50S ribosomal subunit, although it is not seen to bind rRNA by itself. It is important during the early stages of 50S assembly. In Staphylococcus epidermidis (strain ATCC 35984 / DSM 28319 / BCRC 17069 / CCUG 31568 / BM 3577 / RP62A), this protein is Large ribosomal subunit protein uL13.